The chain runs to 30 residues: Trypsin inhibitor 3 (30 aa).

Position 1 is a pyrrolidone carboxylic acid (Gln-1). Cystine bridges form between Cys-4/Cys-21, Cys-11/Cys-23, and Cys-17/Cys-29.

It localises to the secreted. In terms of biological role, inhibits trypsin; probably participates in a plant defense mechanism. The sequence is that of Trypsin inhibitor 3 from Momordica cochinchinensis (Spiny bitter cucumber).